We begin with the raw amino-acid sequence, 107 residues long: Vasopressin-neurophysin 2 (107 aa).

Cysteines 1 and 6 form a disulfide. Position 9 is a glycine amide (Gly-9). Cystine bridges form between Cys-22–Cys-66, Cys-25–Cys-39, Cys-33–Cys-56, Cys-40–Cys-46, Cys-73–Cys-85, Cys-79–Cys-97, and Cys-86–Cys-91.

It belongs to the vasopressin/oxytocin family. As to quaternary structure, interacts with vasopressin receptors V1bR/AVPR1B (Ki=85 pM), V1aR/AVPR1A (Ki=0.6 nM) and V2R/AVPR2 (Ki=4.9 nM). Interacts with oxytocin receptor (OXTR) (Ki=110 nM).

The protein localises to the secreted. Functionally, neurophysin 2 specifically binds vasopressin. Its function is as follows. Vasopressin has a direct antidiuretic action on the kidney, it also causes vasoconstriction of the peripheral vessels. Acts by binding to vasopressin receptors (V1bR/AVPR1B, V1aR/AVPR1A, and V2R/AVPR2). This Balaenoptera physalus (Fin whale) protein is Vasopressin-neurophysin 2 (AVP).